We begin with the raw amino-acid sequence, 2245 residues long: Myosin-J heavy chain (2245 aa).

Positions 25-77 (QEGAGVWIPDQELGWIGADVIEHSETSADQVLVRTEDDREVKIPLSKVFQKNP) constitute a Myosin N-terminal SH3-like domain. Positions 81 to 821 (EGVDDLSFLS…QLASLEDMRL (741 aa)) constitute a Myosin motor domain. 174–181 (GESGAGKT) contributes to the ATP binding site. A disordered region spans residues 646–672 (FTQSPGGHPQGNGGPTSSNTKGTSGSS). Residues 660-672 (PTSSNTKGTSGSS) show a composition bias toward low complexity. An actin-binding region spans residues 669–749 (SGSSSMKFLS…GFPTRRLLSE (81 aa)). IQ domains are found at residues 824-851 (LDRS…RDAS), 872-901 (RTHS…ASLQ), and 943-972 (KLRG…EARS). Residues 973-1812 (LRTVQEQKNK…NYHMLEDRME (840 aa)) are a coiled coil. The disordered stretch occupies residues 1504–1524 (KKQLTQLQQQHEQSSTQLLLA). Low complexity predominate over residues 1506–1523 (QLTQLQQQHEQSSTQLLL). A Dilute domain is found at 1969–2188 (IDFIDQLQQS…IASICPPNKS (220 aa)).

It belongs to the TRAFAC class myosin-kinesin ATPase superfamily. Myosin family. Homodimer that associates with six light chains.

The protein resides in the contractile vacuole. Functionally, processive motor protein that can move over long distances along F-actin without disassociating; processiveness depends on high physiological Mg(2+) concentrations. Presents a high actin affinity in the presence of ADP, fast ATP hydrolysis, and a high steady-state ATPase activity in the presence of actin that is rate limited by ADP release. Physiological decrease of free Mg(2+) ions leads to an increased rate of ADP release and shortening of the fraction of time it spends in the strong acting binding states. The protein is Myosin-J heavy chain (myoJ) of Dictyostelium discoideum (Social amoeba).